A 218-amino-acid polypeptide reads, in one-letter code: Probable transaldolase (218 aa).

Lysine 87 acts as the Schiff-base intermediate with substrate in catalysis.

This sequence belongs to the transaldolase family. Type 3B subfamily.

It localises to the cytoplasm. The catalysed reaction is D-sedoheptulose 7-phosphate + D-glyceraldehyde 3-phosphate = D-erythrose 4-phosphate + beta-D-fructose 6-phosphate. It participates in carbohydrate degradation; pentose phosphate pathway; D-glyceraldehyde 3-phosphate and beta-D-fructose 6-phosphate from D-ribose 5-phosphate and D-xylulose 5-phosphate (non-oxidative stage): step 2/3. In terms of biological role, transaldolase is important for the balance of metabolites in the pentose-phosphate pathway. The chain is Probable transaldolase from Bacteroides fragilis (strain ATCC 25285 / DSM 2151 / CCUG 4856 / JCM 11019 / LMG 10263 / NCTC 9343 / Onslow / VPI 2553 / EN-2).